A 314-amino-acid polypeptide reads, in one-letter code: Olfactory receptor 5P6 (314 aa).

Over 1–28 (MAFQEDGNHTAVTEFVLFGLTDDPVLRV) the chain is Extracellular. Asparagine 8 is a glycosylation site (N-linked (GlcNAc...) asparagine). Residues 29-49 (ILFIIFLCIYLVTVSGNLSTI) form a helical membrane-spanning segment. The Cytoplasmic portion of the chain corresponds to 50–57 (LLIRVSSQ). A helical membrane pass occupies residues 58–78 (LHHPMYFFLSHLAFADIGYSS). Topologically, residues 79–102 (SVTPNMLVNFLVERHTISYIGCAI) are extracellular. An intrachain disulfide couples cysteine 100 to cysteine 192. Residues 103–123 (QLGSVVFFGSSECFILAAMAY) traverse the membrane as a helical segment. Residues 124–136 (DRFMAICNPLLYS) lie on the Cytoplasmic side of the membrane. Residues 137–157 (TKMSTQVCVQLLLIAYIGGFL) traverse the membrane as a helical segment. Topologically, residues 158–199 (NTWSFTICFYSLVFCGPNGVNHFFCDFAPLIELSCSDVSVPA) are extracellular. A helical membrane pass occupies residues 200–220 (TVPSFTAGSIIVVTVIVIAIS). Residues 221 to 240 (YIYILITILKMHSTEGRQKA) are Cytoplasmic-facing. A helical membrane pass occupies residues 241–261 (FSTCTSHLTAVTLFYGTITFI). The Extracellular portion of the chain corresponds to 262–274 (YVMPKSSFSTDQN). Residues 275-295 (KVVSVFYMVVIPMLNPLIYSL) form a helical membrane-spanning segment. Residues 296–314 (RNNEIKGALKRQIGRKIFS) lie on the Cytoplasmic side of the membrane.

It belongs to the G-protein coupled receptor 1 family.

It localises to the cell membrane. In terms of biological role, potential odorant receptor. The protein is Olfactory receptor 5P6 of Mus musculus (Mouse).